A 434-amino-acid polypeptide reads, in one-letter code: Methylenetetrahydrofolate--tRNA-(uracil-5-)-methyltransferase TrmFO (434 aa).

Residue 10-15 coordinates FAD; that stretch reads GAGLAG.

This sequence belongs to the MnmG family. TrmFO subfamily. FAD serves as cofactor.

The protein resides in the cytoplasm. It catalyses the reaction uridine(54) in tRNA + (6R)-5,10-methylene-5,6,7,8-tetrahydrofolate + NADH + H(+) = 5-methyluridine(54) in tRNA + (6S)-5,6,7,8-tetrahydrofolate + NAD(+). It carries out the reaction uridine(54) in tRNA + (6R)-5,10-methylene-5,6,7,8-tetrahydrofolate + NADPH + H(+) = 5-methyluridine(54) in tRNA + (6S)-5,6,7,8-tetrahydrofolate + NADP(+). Functionally, catalyzes the folate-dependent formation of 5-methyl-uridine at position 54 (M-5-U54) in all tRNAs. The chain is Methylenetetrahydrofolate--tRNA-(uracil-5-)-methyltransferase TrmFO from Bacillus cereus (strain Q1).